Here is a 613-residue protein sequence, read N- to C-terminus: ATP-dependent RNA helicase DeaD (613 aa).

The Q motif motif lies at 5–33; the sequence is ITFNDLGLPEFILKAVSDLGFETPSPIQQ. In terms of domain architecture, Helicase ATP-binding spans 36-207; the sequence is IPHLLNGNDV…KRFMNDPQEV (172 aa). ATP is bound at residue 49 to 56; the sequence is AQTGSGKT. A DEAD box motif is present at residues 155-158; the sequence is DEAD. The Helicase C-terminal domain occupies 231–378; sequence KNEALLRFLE…EVELPNHLVL (148 aa). Disordered stretches follow at residues 434–476 and 552–613; these read ILPP…PQPM and AVKS…RSSF. 2 stretches are compositionally biased toward basic and acidic residues: residues 440-469 and 556-613; these read PMEKRRRERNDRGDRRENPRSAERRGERKG and DNSR…RSSF.

This sequence belongs to the DEAD box helicase family. DeaD/CsdA subfamily.

It is found in the cytoplasm. It carries out the reaction ATP + H2O = ADP + phosphate + H(+). Its function is as follows. DEAD-box RNA helicase involved in various cellular processes at low temperature, including ribosome biogenesis, mRNA degradation and translation initiation. This chain is ATP-dependent RNA helicase DeaD, found in Haemophilus influenzae (strain ATCC 51907 / DSM 11121 / KW20 / Rd).